The sequence spans 512 residues: ETS translocation variant 3 (512 aa).

The ETS DNA-binding region spans 35-116 (IQLWHFILEL…KGKRFTYKFN (82 aa)). The interval 136–222 (VPQSAPPVPT…NAIGGGGIGH (87 aa)) is disordered. Ser-139, Ser-159, and Ser-315 each carry phosphoserine. Residues 158 to 184 (HSPTNDVQPGRFSASSLTASGQESSNG) are compositionally biased toward polar residues. The segment at 336 to 512 (PEESTQFSIK…QGLATAAADA (177 aa)) is disordered. 3 stretches are compositionally biased toward basic and acidic residues: residues 380–406 (IKVEPASEKDPESLRQSAREKEEHTQE), 453–468 (DRPGKEPSAPEKKEDA), and 479–491 (RWNDDPEARELSK). A Glycyl lysine isopeptide (Lys-Gly) (interchain with G-Cter in SUMO2) cross-link involves residue Lys-381. Lys-388 carries the post-translational modification N6-acetyllysine; alternate. Residue Lys-388 forms a Glycyl lysine isopeptide (Lys-Gly) (interchain with G-Cter in SUMO2); alternate linkage.

This sequence belongs to the ETS family.

It is found in the nucleus. Functionally, transcriptional repressor that contribute to growth arrest during terminal macrophage differentiation by repressing target genes involved in Ras-dependent proliferation. Represses MMP1 promoter activity. This is ETS translocation variant 3 (ETV3) from Homo sapiens (Human).